The primary structure comprises 534 residues: GMP synthase [glutamine-hydrolyzing] (534 aa).

The region spanning Pro-20–Ser-210 is the Glutamine amidotransferase type-1 domain. The active-site Nucleophile is the Cys-97. Residues His-184 and Glu-186 contribute to the active site. Residues Trp-211–Arg-408 enclose the GMPS ATP-PPase domain. Residue Ser-238–Ala-244 coordinates ATP.

Homodimer.

It carries out the reaction XMP + L-glutamine + ATP + H2O = GMP + L-glutamate + AMP + diphosphate + 2 H(+). It functions in the pathway purine metabolism; GMP biosynthesis; GMP from XMP (L-Gln route): step 1/1. In terms of biological role, catalyzes the synthesis of GMP from XMP. This chain is GMP synthase [glutamine-hydrolyzing], found in Parafrankia sp. (strain EAN1pec).